The sequence spans 291 residues: Cytochrome c-552 (291 aa).

The N-terminal stretch at 1-23 is a signal peptide; it reads MKKTLMASAVGAVIAFGTHGAMA. 6 residues coordinate heme c: C68, C71, H72, C157, C161, and H162.

In terms of processing, binds 2 heme c groups per subunit.

The protein resides in the periplasm. In terms of biological role, may play a role in nitrite reduction. Shows peroxidase activity on proteolytic modification. The polypeptide is Cytochrome c-552 (nirB) (Stutzerimonas stutzeri (Pseudomonas stutzeri)).